Here is a 502-residue protein sequence, read N- to C-terminus: Membrane protein insertase YidC (502 aa).

The next 6 membrane-spanning stretches (helical) occupy residues 12 to 32 (FLIF…FYIY), 286 to 306 (LDWG…YWIY), 312 to 332 (WVLS…PLGY), 382 to 402 (LPIL…IITV), 409 to 429 (FLWI…VIMG), and 452 to 472 (ITSV…VLYW).

This sequence belongs to the OXA1/ALB3/YidC family. Type 1 subfamily. As to quaternary structure, interacts with the Sec translocase complex via SecD. Specifically interacts with transmembrane segments of nascent integral membrane proteins during membrane integration.

The protein resides in the cell membrane. In terms of biological role, required for the insertion and/or proper folding and/or complex formation of integral membrane proteins into the membrane. Involved in integration of membrane proteins that insert both dependently and independently of the Sec translocase complex, as well as at least some lipoproteins. Aids folding of multispanning membrane proteins. In Aquifex aeolicus (strain VF5), this protein is Membrane protein insertase YidC.